The sequence spans 210 residues: Probable nicotinate-nucleotide adenylyltransferase (210 aa).

The protein belongs to the NadD family.

The enzyme catalyses nicotinate beta-D-ribonucleotide + ATP + H(+) = deamido-NAD(+) + diphosphate. The protein operates within cofactor biosynthesis; NAD(+) biosynthesis; deamido-NAD(+) from nicotinate D-ribonucleotide: step 1/1. In terms of biological role, catalyzes the reversible adenylation of nicotinate mononucleotide (NaMN) to nicotinic acid adenine dinucleotide (NaAD). The protein is Probable nicotinate-nucleotide adenylyltransferase of Streptococcus pyogenes serotype M18 (strain MGAS8232).